The primary structure comprises 217 residues: Outer-membrane lipoprotein LolB (217 aa).

Positions 1–20 (MSKTVRTLALGGLVLAGLSA) are cleaved as a signal peptide. Cys21 is lipidated: N-palmitoyl cysteine. Cys21 carries the S-diacylglycerol cysteine lipid modification. A disordered region spans residues 105 to 124 (DTTSGAGRLEGLEGGPRSGP).

The protein belongs to the LolB family. Monomer.

The protein localises to the cell outer membrane. Plays a critical role in the incorporation of lipoproteins in the outer membrane after they are released by the LolA protein. This chain is Outer-membrane lipoprotein LolB, found in Xanthomonas axonopodis pv. citri (strain 306).